The primary structure comprises 222 residues: UPF0758 protein CT0611 (222 aa).

In terms of domain architecture, MPN spans 100–222 (KVKGARDVFE…WFSFRDHALL (123 aa)). Zn(2+) is bound by residues histidine 171, histidine 173, and aspartate 184. The JAMM motif signature appears at 171-184 (HNHPSGDVQPSNAD).

Belongs to the UPF0758 family.

The polypeptide is UPF0758 protein CT0611 (Chlorobaculum tepidum (strain ATCC 49652 / DSM 12025 / NBRC 103806 / TLS) (Chlorobium tepidum)).